The chain runs to 190 residues: Ribose 1,5-bisphosphate phosphokinase PhnN (190 aa).

10–17 (GPSGSGKD) serves as a coordination point for ATP.

It belongs to the ribose 1,5-bisphosphokinase family.

The enzyme catalyses alpha-D-ribose 1,5-bisphosphate + ATP = 5-phospho-alpha-D-ribose 1-diphosphate + ADP. It functions in the pathway metabolic intermediate biosynthesis; 5-phospho-alpha-D-ribose 1-diphosphate biosynthesis; 5-phospho-alpha-D-ribose 1-diphosphate from D-ribose 5-phosphate (route II): step 3/3. Functionally, catalyzes the phosphorylation of ribose 1,5-bisphosphate to 5-phospho-D-ribosyl alpha-1-diphosphate (PRPP). The chain is Ribose 1,5-bisphosphate phosphokinase PhnN from Pseudomonas fluorescens (strain SBW25).